The sequence spans 247 residues: Fibroblast growth factor 14 (247 aa).

2 disordered regions span residues 1-38 and 216-247; these read MAAA…KNRG and ETVP…CKTT. Residues 15–25 are compositionally biased toward basic and acidic residues; sequence QAREQHWDRPS.

This sequence belongs to the heparin-binding growth factors family. Interacts with SCN8A.

It is found in the nucleus. Functionally, probably involved in nervous system development and function. The chain is Fibroblast growth factor 14 (Fgf14) from Rattus norvegicus (Rat).